Here is a 300-residue protein sequence, read N- to C-terminus: HTH-type transcriptional regulator ArgP (300 aa).

The HTH lysR-type domain maps to 4–60; it reads PDYRTLQALDAVIRERGFERAAQKLCITQSAVSQRIKQLENLFGQPLLVRTVPPRPT. Residues 21-40 constitute a DNA-binding region (H-T-H motif); that stretch reads FERAAQKLCITQSAVSQRIK.

Belongs to the LysR transcriptional regulatory family. In terms of assembly, homodimer.

Its function is as follows. Controls the transcription of genes involved in arginine and lysine metabolism. The polypeptide is HTH-type transcriptional regulator ArgP (Photorhabdus laumondii subsp. laumondii (strain DSM 15139 / CIP 105565 / TT01) (Photorhabdus luminescens subsp. laumondii)).